Consider the following 505-residue polypeptide: Catalase (505 aa).

Residues 1–25 (MSKQDGKLTGLFGAPVSDRENSMTA) form a disordered region. Catalysis depends on residues H56 and N129. Y339 contacts heme.

It belongs to the catalase family. In terms of assembly, homodimer. Heme serves as cofactor.

It carries out the reaction 2 H2O2 = O2 + 2 H2O. Functionally, decomposes hydrogen peroxide into water and oxygen; serves to protect cells from the toxic effects of hydrogen peroxide. This chain is Catalase (katA), found in Staphylococcus warneri.